A 264-amino-acid polypeptide reads, in one-letter code: ATP synthase subunit a (264 aa).

7 helical membrane-spanning segments follow: residues 29–49, 90–110, 111–131, 134–154, 177–197, 208–228, and 235–255; these read TWHI…LWIF, IAPL…MDMI, PVDW…KVVP, DVNI…YYSI, IPVN…SLAL, LIFI…TLGV, and LIFH…LTIV.

It belongs to the ATPase A chain family. As to quaternary structure, F-type ATPases have 2 components, CF(1) - the catalytic core - and CF(0) - the membrane proton channel. CF(1) has five subunits: alpha(3), beta(3), gamma(1), delta(1), epsilon(1). CF(0) has three main subunits: a(1), b(2) and c(9-12). The alpha and beta chains form an alternating ring which encloses part of the gamma chain. CF(1) is attached to CF(0) by a central stalk formed by the gamma and epsilon chains, while a peripheral stalk is formed by the delta and b chains.

The protein localises to the cell inner membrane. Key component of the proton channel; it plays a direct role in the translocation of protons across the membrane. In Shewanella denitrificans (strain OS217 / ATCC BAA-1090 / DSM 15013), this protein is ATP synthase subunit a.